The primary structure comprises 381 residues: Opsin Rh2 (381 aa).

At 1–56 (MERSLLPEPPLAMALLGPRFEAQTGGNRSVLDNVLPDMAPLVNPYWSRFAPMDPTM) the chain is on the extracellular side. The N-linked (GlcNAc...) asparagine glycan is linked to Asn-27. The chain crosses the membrane as a helical span at residues 57–81 (SKILGLFTLVILIISCCGNGVVVYI). Over 82-93 (FGGTKSLRTPAN) the chain is Cytoplasmic. The helical transmembrane segment at 94-119 (LLVLNLAFSDFCMMASQSPVMIINFY) threads the bilayer. Residues 120–133 (YETWVLGPLWCDIY) are Extracellular-facing. A disulfide bridge connects residues Cys-130 and Cys-207. A helical transmembrane segment spans residues 134–153 (AACGSLFGCVSIWSMCMIAF). Residues 154-172 (DRYNVIVKGINGTPMTIKT) lie on the Cytoplasmic side of the membrane. Residues 173-196 (SIMKIAFIWMMAVFWTIMPLIGWS) traverse the membrane as a helical segment. Topologically, residues 197–220 (SYVPEGNLTACSIDYMTRQWNPRS) are extracellular. A helical membrane pass occupies residues 221–248 (YLITYSLFVYYTPLFMICYSYWFIIATV). Over 249–283 (AAHEKAMRDQAKKMNVKSLRSSEDCDKSAENKLAK) the chain is Cytoplasmic. The chain crosses the membrane as a helical span at residues 284-307 (VALTTISLWFMAWTPYLIICYFGL). Over 308-314 (FKIDGLT) the chain is Extracellular. The helical transmembrane segment at 315–339 (PLTTIWGATFAKTSAVYNPIVYGIS) threads the bilayer. Lys-326 carries the post-translational modification N6-(retinylidene)lysine. At 340-381 (HPKYRLVLKEKCPMCVCGSTDEPKPDAPPSDTETTSEAESKA) the chain is on the cytoplasmic side. Residues 358-381 (STDEPKPDAPPSDTETTSEAESKA) are disordered. Residues 370-381 (DTETTSEAESKA) are compositionally biased toward polar residues.

Belongs to the G-protein coupled receptor 1 family. Opsin subfamily. Some or all of the Ser/Thr residues present in the C-terminal part may be phosphorylated.

It is found in the membrane. Visual pigments are the light-absorbing molecules that mediate vision. They consist of an apoprotein, opsin, covalently linked to cis-retinal. The chain is Opsin Rh2 (Rh2) from Drosophila pseudoobscura pseudoobscura (Fruit fly).